The sequence spans 302 residues: Transmembrane protein 191C (302 aa).

Disordered regions lie at residues 1–21 and 54–73; these read MAAT…GRQR and LRRR…EAAR. The stretch at 5-160 forms a coiled coil; that stretch reads QELLLQLQKD…EKLQQDALQT (156 aa). The chain crosses the membrane as a helical span at residues 238-258; that stretch reads VLGALQVLLTLPLLFLGLSLL.

It belongs to the TMEM191 family.

Its subcellular location is the membrane. This is Transmembrane protein 191C from Homo sapiens (Human).